The chain runs to 367 residues: Membrane-bound lytic murein transglycosylase C (367 aa).

Residues 1-19 (MRKYAKYLPFCLVVPFLAA) form the signal peptide. Cysteine 20 carries the N-palmitoyl cysteine lipid modification. Cysteine 20 carries the S-diacylglycerol cysteine lipid modification.

Belongs to the transglycosylase Slt family.

It is found in the cell outer membrane. It catalyses the reaction Exolytic cleavage of the (1-&gt;4)-beta-glycosidic linkage between N-acetylmuramic acid (MurNAc) and N-acetylglucosamine (GlcNAc) residues in peptidoglycan, from either the reducing or the non-reducing ends of the peptidoglycan chains, with concomitant formation of a 1,6-anhydrobond in the MurNAc residue.. In terms of biological role, murein-degrading enzyme. May play a role in recycling of muropeptides during cell elongation and/or cell division. The polypeptide is Membrane-bound lytic murein transglycosylase C (Haemophilus ducreyi (strain 35000HP / ATCC 700724)).